Consider the following 471-residue polypeptide: F-box only protein 3 (471 aa).

The region spanning 10–56 is the F-box domain; sequence PLTLESLPTDPLLLILSFLDYRDLINCCYVSRRLSQLSSHDPLWRRH. Residues 278-408 enclose the ApaG domain; sequence VATTGDITVS…FHMACPTFRV (131 aa). Acidic residues predominate over residues 419–451; the sequence is EYEEMEEEEEEEEEEDEDDDSADMDESDEDDEE. Residues 419–455 form a disordered region; the sequence is EYEEMEEEEEEEEEEDEDDDSADMDESDEDDEEERRR.

As to quaternary structure, part of a SCF (SKP1-cullin-F-box) protein ligase complex SCF(FBXO3) consisting of FBXO3, SKP1, CUL1 and RBX1. Interacts with PML, interaction is direct and takes place either alone or within the SCF complex. (Microbial infection) Interacts (via ApaG domain) with Rift valley fever virus NSs helical filament; this interaction forms a filamentous E3 which mediates degradation of TFIIH complex through interaction with GT2H1.

It localises to the nucleus. Its pathway is protein modification; protein ubiquitination. In terms of biological role, substrate recognition component of the SCF (SKP1-CUL1-F-box protein)-type E3 ubiquitin ligase complex, SCF(FBXO3), which mediates the ubiquitination and subsequent proteasomal degradation of target proteins. Mediates the ubiquitination of HIPK2 and probably that of EP300, leading to rapid degradation by the proteasome. In the presence of PML, HIPK2 ubiquitination still occurs, but degradation is prevented. PML, HIPK2 and FBXO3 may act synergically to activate p53/TP53-dependent transactivation. The SCF(FBXO3) also acts as a regulator of inflammation by mediating ubiquitination and degradation of FBXL2 in response to lipopolysaccharide (LPS). The SCF(FBXO3) complex specifically recognizes FBXL2 phosphorylated at 'Thr-404' and promotes its ubiquitination. Functionally, (Microbial infection) Associates with the Rift valley fever virus NSs to form a remodeled E3 ligase that triggers efficient proteasomal degradation of targeted proteins. The filamentous E3 ligase targets the TFIIH complex leading to robust inhibition of antiviral immunity and enhances viral pathogenesis. This is F-box only protein 3 from Homo sapiens (Human).